A 429-amino-acid polypeptide reads, in one-letter code: Ribosomal RNA small subunit methyltransferase B (429 aa).

S-adenosyl-L-methionine contacts are provided by residues 254–260, aspartate 277, aspartate 303, and aspartate 322; that span reads CAAPGGK. The active-site Nucleophile is the cysteine 375. The interval 397-419 is disordered; it reads ALSETGTPDQPGQQNLPGGEEGD. Positions 400-412 are enriched in polar residues; it reads ETGTPDQPGQQNL.

The protein belongs to the class I-like SAM-binding methyltransferase superfamily. RsmB/NOP family.

It localises to the cytoplasm. The catalysed reaction is cytidine(967) in 16S rRNA + S-adenosyl-L-methionine = 5-methylcytidine(967) in 16S rRNA + S-adenosyl-L-homocysteine + H(+). Its function is as follows. Specifically methylates the cytosine at position 967 (m5C967) of 16S rRNA. The chain is Ribosomal RNA small subunit methyltransferase B from Salmonella agona (strain SL483).